Reading from the N-terminus, the 232-residue chain is Vesicle transport through interaction with t-SNAREs homolog 1B (232 aa).

Residue Ala2 is modified to N-acetylalanine. Interaction with CLINT1 stretches follow at residues Ala2–Glu23 and Ala69–Phe73. The Cytoplasmic segment spans residues Ala2–Leu208. Positions Met35–Thr98 form a coiled coil. Position 103 is a phosphothreonine (Thr103). Omega-N-methylarginine is present on Arg107. Ser138 is modified (phosphoserine). A coiled-coil region spans residues Ser161–Met198. Residues Leu209 to Leu229 form a helical; Anchor for type IV membrane protein membrane-spanning segment. Topologically, residues Arg230–His232 are vesicular.

Belongs to the VTI1 family. As to quaternary structure, forms a SNARE complex with STX7, STX8 and VAMP8 which functions in the homotypic fusion of late endosomes. Component of the SNARE complex composed of STX7, STX8, VAMP7 and VIT1B that is required for heterotypic fusion of late endosomes with lysosomes. May interact with STX17. Interacts with CLINT1.

The protein resides in the early endosome membrane. It is found in the late endosome membrane. It localises to the lysosome membrane. Its subcellular location is the cytoplasmic granule. The protein localises to the recycling endosome membrane. Its function is as follows. V-SNARE that mediates vesicle transport pathways through interactions with t-SNAREs on the target membrane. These interactions are proposed to mediate aspects of the specificity of vesicle trafficking and to promote fusion of the lipid bilayers. May be concerned with increased secretion of cytokines associated with cellular senescence. This is Vesicle transport through interaction with t-SNAREs homolog 1B (VTI1B) from Bos taurus (Bovine).